Here is a 110-residue protein sequence, read N- to C-terminus: Protein YcgL (110 aa).

One can recognise a YcgL domain in the interval 14 to 98 (MFCVIYRSSK…PPEDLLKQHL (85 aa)).

In Salmonella arizonae (strain ATCC BAA-731 / CDC346-86 / RSK2980), this protein is Protein YcgL.